A 193-amino-acid polypeptide reads, in one-letter code: Ubiquitin-conjugating enzyme E2 E1 (193 aa).

The disordered stretch occupies residues 1–45 (MSDDDSRASTSSSSSSSSNQQTEKEGSTPKKKESKVSMSKNSKLL). Ser2 carries the N-acetylserine modification. Residues 8 to 18 (ASTSSSSSSSS) show a composition bias toward low complexity. The span at 22 to 35 (TEKEGSTPKKKESK) shows a compositional bias: basic and acidic residues. Positions 36–45 (VSMSKNSKLL) are enriched in polar residues. A UBC core domain is found at 47–193 (TSAKRIQKEL…ARQWTKRYAT (147 aa)). The active-site Glycyl thioester intermediate is the Cys131. Residue Lys136 forms a Glycyl lysine isopeptide (Lys-Gly) (interchain with G-Cter in ISG15) linkage.

Belongs to the ubiquitin-conjugating enzyme family. In terms of assembly, interacts with RNF14. In terms of processing, ISGylation suppresses ubiquitin E2 enzyme activity. Autoubiquitinated.

It localises to the nucleus. The enzyme catalyses S-ubiquitinyl-[E1 ubiquitin-activating enzyme]-L-cysteine + [E2 ubiquitin-conjugating enzyme]-L-cysteine = [E1 ubiquitin-activating enzyme]-L-cysteine + S-ubiquitinyl-[E2 ubiquitin-conjugating enzyme]-L-cysteine.. It catalyses the reaction S-ubiquitinyl-[E1 ubiquitin-activating enzyme]-L-cysteine + [acceptor protein]-L-lysine = [E1 ubiquitin-activating enzyme]-L-cysteine + N(6)-monoubiquitinyl-[acceptor protein]-L-lysine.. It functions in the pathway protein modification; protein ubiquitination. Functionally, accepts ubiquitin from the E1 complex and catalyzes its covalent attachment to other proteins. Catalyzes the covalent attachment of ISG15 to other proteins. Mediates the selective degradation of short-lived and abnormal proteins. In vitro also catalyzes 'Lys-48'-linked polyubiquitination. This Mus musculus (Mouse) protein is Ubiquitin-conjugating enzyme E2 E1 (Ube2e1).